Consider the following 72-residue polypeptide: ATP-dependent Clp protease ATP-binding subunit ClpA homolog (72 aa).

Belongs to the ClpA/ClpB family.

The protein localises to the plastid. It localises to the chloroplast. May interact with a ClpP-like protease involved in degradation of denatured proteins in the chloroplast. The chain is ATP-dependent Clp protease ATP-binding subunit ClpA homolog from Populus euphratica (Euphrates poplar).